A 213-amino-acid chain; its full sequence is MKRRISTIANLVLQQKPKAFYDIGCDHGYLARELVQQNPSLVGVNSDISANALGAAKGLLKDHTNMHFITSDGFDLLPNLNLDPAVGVIAGLGGLKIMQILAQHNNFLKHFVLQPQSNIIELRRFLSANQWTITTETLVEERGFIYLVLAVDKTKAQTQYLTEEQMILGPHLVNFTDKQMLVKYYNGLLKNFTARLNPSQFDSQVIHVLNKII.

The protein belongs to the TrmK family.

It is found in the cytoplasm. This is Putative tRNA methyltransferase MPN_351 from Mycoplasma pneumoniae (strain ATCC 29342 / M129 / Subtype 1) (Mycoplasmoides pneumoniae).